A 193-amino-acid chain; its full sequence is Xanthine phosphoribosyltransferase (193 aa).

L20 and T27 together coordinate xanthine. 128 to 132 is a 5-phospho-alpha-D-ribose 1-diphosphate binding site; it reads ANGQA. K156 contacts xanthine.

The protein belongs to the purine/pyrimidine phosphoribosyltransferase family. Xpt subfamily. As to quaternary structure, homodimer.

It is found in the cytoplasm. It carries out the reaction XMP + diphosphate = xanthine + 5-phospho-alpha-D-ribose 1-diphosphate. Its pathway is purine metabolism; XMP biosynthesis via salvage pathway; XMP from xanthine: step 1/1. Its function is as follows. Converts the preformed base xanthine, a product of nucleic acid breakdown, to xanthosine 5'-monophosphate (XMP), so it can be reused for RNA or DNA synthesis. The polypeptide is Xanthine phosphoribosyltransferase (Streptococcus equi subsp. zooepidemicus (strain H70)).